The primary structure comprises 521 residues: Major capsid protein (521 aa).

Belongs to the Tevenvirinae major capsid protein family. As to quaternary structure, homohexamer. Interacts with the portal protein. Interacts with the capsid vertex protein that forms pentamers. Interacts with hoc; one hoc molecule associates with each capsid hexamer. Interacts with soc; this interaction reinforces the capsid structure. A total of 960 subunits of the major capsid protein forms the 160 hexamers. In terms of processing, a proteolytic cleavage by the prohead core protein protease gives rise to the mature major capsid protein during virus maturation.

It is found in the virion. Major capsid protein that self-associates to form hexamers, building most of the capsid in association with pentons made of the capsid vertex protein and one dodecamer of the portal protein. The major capsid protein self-associates to form 160 hexamers, building most of the T=13 laevo capsid. Folding of major capsid protein requires the assistance of two chaperones, the host chaperone groL acting with the phage encoded gp23-specific chaperone, gp31. The capsid also contains two nonessential outer capsid proteins, Hoc and Soc, which decorate the capsid surface. Through binding to adjacent gp23 subunits, Soc reinforces the capsid structure. This chain is Major capsid protein (gp23), found in Escherichia coli (Bacteriophage T4).